The primary structure comprises 103 residues: NADH-quinone oxidoreductase subunit K 2 (103 aa).

3 helical membrane-spanning segments follow: residues 7–27, 31–51, and 63–83; these read LAWYLMLSAFLFICGVIGFMI, IITIFMCIELMLNAVNLTFVA, and IFVFFVMVVAAAESAVGLGII.

Belongs to the complex I subunit 4L family. NDH-1 is composed of 14 different subunits. Subunits NuoA, H, J, K, L, M, N constitute the membrane sector of the complex.

It localises to the cell inner membrane. It carries out the reaction a quinone + NADH + 5 H(+)(in) = a quinol + NAD(+) + 4 H(+)(out). NDH-1 shuttles electrons from NADH, via FMN and iron-sulfur (Fe-S) centers, to quinones in the respiratory chain. The immediate electron acceptor for the enzyme in this species is believed to be ubiquinone. Couples the redox reaction to proton translocation (for every two electrons transferred, four hydrogen ions are translocated across the cytoplasmic membrane), and thus conserves the redox energy in a proton gradient. The protein is NADH-quinone oxidoreductase subunit K 2 of Koribacter versatilis (strain Ellin345).